We begin with the raw amino-acid sequence, 330 residues long: tRNA uridine(34) hydroxylase (330 aa).

The Rhodanese domain occupies 123-217 (SDPETILVDT…YLEEVPKEES (95 aa)). Residue Cys-177 is the Cysteine persulfide intermediate of the active site. The disordered stretch occupies residues 310–330 (LNKQQKQQAKEIARKKAKSEI). Positions 317–330 (QAKEIARKKAKSEI) are enriched in basic and acidic residues.

This sequence belongs to the TrhO family.

The enzyme catalyses uridine(34) in tRNA + AH2 + O2 = 5-hydroxyuridine(34) in tRNA + A + H2O. Functionally, catalyzes oxygen-dependent 5-hydroxyuridine (ho5U) modification at position 34 in tRNAs. The polypeptide is tRNA uridine(34) hydroxylase (Francisella philomiragia subsp. philomiragia (strain ATCC 25017 / CCUG 19701 / FSC 153 / O#319-036)).